The primary structure comprises 635 residues: 1-deoxy-D-xylulose-5-phosphate synthase (635 aa).

Thiamine diphosphate is bound by residues His72 and 113–115 (GHA). Asp144 provides a ligand contact to Mg(2+). Residues 145–146 (GA), Asn174, Tyr286, and Glu369 contribute to the thiamine diphosphate site. Position 174 (Asn174) interacts with Mg(2+).

It belongs to the transketolase family. DXPS subfamily. In terms of assembly, homodimer. It depends on Mg(2+) as a cofactor. Thiamine diphosphate is required as a cofactor.

The enzyme catalyses D-glyceraldehyde 3-phosphate + pyruvate + H(+) = 1-deoxy-D-xylulose 5-phosphate + CO2. Its pathway is metabolic intermediate biosynthesis; 1-deoxy-D-xylulose 5-phosphate biosynthesis; 1-deoxy-D-xylulose 5-phosphate from D-glyceraldehyde 3-phosphate and pyruvate: step 1/1. In terms of biological role, catalyzes the acyloin condensation reaction between C atoms 2 and 3 of pyruvate and glyceraldehyde 3-phosphate to yield 1-deoxy-D-xylulose-5-phosphate (DXP). The sequence is that of 1-deoxy-D-xylulose-5-phosphate synthase from Acaryochloris marina (strain MBIC 11017).